Consider the following 169-residue polypeptide: Peptide methionine sulfoxide reductase MsrA (169 aa).

Cys-10 is an active-site residue.

Belongs to the MsrA Met sulfoxide reductase family.

The catalysed reaction is L-methionyl-[protein] + [thioredoxin]-disulfide + H2O = L-methionyl-(S)-S-oxide-[protein] + [thioredoxin]-dithiol. The enzyme catalyses [thioredoxin]-disulfide + L-methionine + H2O = L-methionine (S)-S-oxide + [thioredoxin]-dithiol. Functionally, has an important function as a repair enzyme for proteins that have been inactivated by oxidation. Catalyzes the reversible oxidation-reduction of methionine sulfoxide in proteins to methionine. The protein is Peptide methionine sulfoxide reductase MsrA of Streptococcus pyogenes serotype M28 (strain MGAS6180).